Consider the following 107-residue polypeptide: Integration host factor subunit beta (107 aa).

A disordered region spans residues 76–107 (FVPHFKPGKELRERVDGRAGEPLKADDPDDDR). Residues 82–101 (PGKELRERVDGRAGEPLKAD) show a composition bias toward basic and acidic residues.

The protein belongs to the bacterial histone-like protein family. Heterodimer of an alpha and a beta chain.

Functionally, this protein is one of the two subunits of integration host factor, a specific DNA-binding protein that functions in genetic recombination as well as in transcriptional and translational control. This is Integration host factor subunit beta from Burkholderia cenocepacia (strain HI2424).